The following is a 44-amino-acid chain: Photosystem I reaction center subunit IX (44 aa).

The chain crosses the membrane as a helical span at residues 7–27 (YLSVAPVLSTLWFGSLAGLLI).

The protein belongs to the PsaJ family.

The protein resides in the plastid. It is found in the chloroplast thylakoid membrane. In terms of biological role, may help in the organization of the PsaE and PsaF subunits. This chain is Photosystem I reaction center subunit IX, found in Lactuca sativa (Garden lettuce).